The sequence spans 475 residues: Sulfate adenylyltransferase subunit 1 (475 aa).

In terms of domain architecture, tr-type G spans 25–239; it reads KSLLRFLTCG…EVLETVEIQR (215 aa). The segment at 34–41 is G1; it reads GSVDDGKS. 34–41 contacts GTP; it reads GSVDDGKS. Residues 92-96 are G2; sequence GITID. Residues 113–116 are G3; it reads DTPG. Residues 113-117 and 168-171 each bind GTP; these read DTPGH and NKMD. Positions 168–171 are G4; that stretch reads NKMD. The segment at 206–208 is G5; it reads SAL.

The protein belongs to the TRAFAC class translation factor GTPase superfamily. Classic translation factor GTPase family. CysN/NodQ subfamily. In terms of assembly, heterodimer composed of CysD, the smaller subunit, and CysN.

The catalysed reaction is sulfate + ATP + H(+) = adenosine 5'-phosphosulfate + diphosphate. The protein operates within sulfur metabolism; hydrogen sulfide biosynthesis; sulfite from sulfate: step 1/3. In terms of biological role, with CysD forms the ATP sulfurylase (ATPS) that catalyzes the adenylation of sulfate producing adenosine 5'-phosphosulfate (APS) and diphosphate, the first enzymatic step in sulfur assimilation pathway. APS synthesis involves the formation of a high-energy phosphoric-sulfuric acid anhydride bond driven by GTP hydrolysis by CysN coupled to ATP hydrolysis by CysD. In Escherichia coli (strain 55989 / EAEC), this protein is Sulfate adenylyltransferase subunit 1.